A 526-amino-acid chain; its full sequence is Peptide chain release factor 3 (526 aa).

The tr-type G domain maps to 8–277 (NKRRTFAIIS…GLTEWAPKPQ (270 aa)). GTP contacts are provided by residues 17-24 (SHPDAGKT), 85-89 (DTPGH), and 139-142 (NKLD).

It belongs to the TRAFAC class translation factor GTPase superfamily. Classic translation factor GTPase family. PrfC subfamily.

It localises to the cytoplasm. Functionally, increases the formation of ribosomal termination complexes and stimulates activities of RF-1 and RF-2. It binds guanine nucleotides and has strong preference for UGA stop codons. It may interact directly with the ribosome. The stimulation of RF-1 and RF-2 is significantly reduced by GTP and GDP, but not by GMP. The protein is Peptide chain release factor 3 of Actinobacillus pleuropneumoniae serotype 5b (strain L20).